A 1044-amino-acid polypeptide reads, in one-letter code: Protein ITPRID1 (1044 aa).

The segment covering 1-14 (MMAQKSQGSDNLQE) has biased composition (polar residues). 4 disordered regions span residues 1 to 20 (MMAQKSQGSDNLQEGQEKSK), 230 to 251 (EEKAGGESVQRTSVSAAKEHRR), 388 to 489 (MEEV…SSQE), and 583 to 607 (PEGAGKVQSHHNESQRSPGNDHTQD). The span at 388 to 398 (MEEVQSFEEET) shows a compositional bias: acidic residues. 2 stretches are compositionally biased toward polar residues: residues 460–469 (HSLVSSQDCQ) and 480–489 (RASMSFSSQE). The stretch at 896 to 937 (SRDMSEEEREEAEQLQTLREALRQQVAELEFQLGDRAQQIRE) forms a coiled coil.

The sequence is that of Protein ITPRID1 from Homo sapiens (Human).